The primary structure comprises 168 residues: MKVLLIQDVEHLGTAGDIKEVSGGYGRNYLLPKKLAVFATPGLIKQAEERLAKQRKLEAKQREELRGLADSINGVTLKFVTKVGEQDRLYGSVTSSDIAEKLQAAIGQEVDRRKIQLDEPIKRTGVYSIGVRLLAGLEPHINVVVEGENGEGSVQPAAEAAEVASTEA.

The interval Glu148 to Ala168 is disordered. Over residues Ala157 to Ala168 the composition is skewed to low complexity.

This sequence belongs to the bacterial ribosomal protein bL9 family.

Functionally, binds to the 23S rRNA. The protein is Large ribosomal subunit protein bL9 of Herpetosiphon aurantiacus (strain ATCC 23779 / DSM 785 / 114-95).